We begin with the raw amino-acid sequence, 398 residues long: Probable RNA methyltransferase sce1580 (398 aa).

The tract at residues 1-24 is disordered; the sequence is MRVPEIPEETASPLRAGDPPAQVA. Glu140 (proton acceptor) is an active-site residue. In terms of domain architecture, Radical SAM core spans 146 to 378; the sequence is GPARTTLCVS…TLVRRPRGRD (233 aa). Cys153 and Cys383 form a disulfide bridge. [4Fe-4S] cluster-binding residues include Cys160, Cys164, and Cys167. Residues 211–212, Ser243, 265–267, and Asn340 each bind S-adenosyl-L-methionine; these read GE and SLN. The active-site S-methylcysteine intermediate is the Cys383.

Belongs to the radical SAM superfamily. RlmN family. It depends on [4Fe-4S] cluster as a cofactor.

The protein localises to the cytoplasm. This Sorangium cellulosum (strain So ce56) (Polyangium cellulosum (strain So ce56)) protein is Probable RNA methyltransferase sce1580.